A 288-amino-acid polypeptide reads, in one-letter code: Polyamine aminopropyltransferase (288 aa).

The PABS domain occupies 9–238 (ETLHDQFGQY…GIMTFAWATD (230 aa)). An S-methyl-5'-thioadenosine-binding site is contributed by glutamine 33. Spermidine is bound by residues histidine 64 and aspartate 88. S-methyl-5'-thioadenosine is bound by residues glutamate 108 and 140–141 (DG). Catalysis depends on aspartate 158, which acts as the Proton acceptor. Residue 158-161 (DCTD) coordinates spermidine. Proline 165 provides a ligand contact to S-methyl-5'-thioadenosine.

This sequence belongs to the spermidine/spermine synthase family. In terms of assembly, homodimer or homotetramer.

It is found in the cytoplasm. It carries out the reaction S-adenosyl 3-(methylsulfanyl)propylamine + putrescine = S-methyl-5'-thioadenosine + spermidine + H(+). It participates in amine and polyamine biosynthesis; spermidine biosynthesis; spermidine from putrescine: step 1/1. Catalyzes the irreversible transfer of a propylamine group from the amino donor S-adenosylmethioninamine (decarboxy-AdoMet) to putrescine (1,4-diaminobutane) to yield spermidine. This chain is Polyamine aminopropyltransferase, found in Escherichia fergusonii (strain ATCC 35469 / DSM 13698 / CCUG 18766 / IAM 14443 / JCM 21226 / LMG 7866 / NBRC 102419 / NCTC 12128 / CDC 0568-73).